Consider the following 282-residue polypeptide: METGAGIGLYPLHRCKTIYLVRHAQGIHNVDGEKNYKAYMSHDYFDAELTQLGWKQVDSLRKHVHSSGLHKKIELVISSPLMRTLQTAVGVFGGEGYTDMSDVLPLMVANAGNSSRAAISSLNCPPVITEESCREHLGVHPCDQRRSISDYQFLFPAVDFSLIESEEDKLWKADVRETIEELAARGKKFLNWLWTRKEKEIAIVTHSGFLFHTLNALQNECHPDVKKEICGHFANCELRSMVIVDRSMLGSDSSVTDYPGKIPKGIDLPSDAVVDDNNIKVE.

H23 serves as the catalytic Tele-phosphohistidine intermediate. The active-site Proton donor/acceptor is E135.

It belongs to the phosphoglycerate mutase family.

May play a role in carbohydrates metabolism. This chain is Phosphoglycerate mutase-like protein 1, found in Arabidopsis thaliana (Mouse-ear cress).